The primary structure comprises 291 residues: Flavonol synthase/flavanone 3-hydroxylase (291 aa).

Positions 151-250 (CWYVMNINHY…RMSWPVLVSP (100 aa)) constitute a Fe2OG dioxygenase domain. H175, D177, and H231 together coordinate Fe cation.

The protein belongs to the iron/ascorbate-dependent oxidoreductase family. L-ascorbate is required as a cofactor. Fe cation serves as cofactor.

It is found in the cytoplasm. It catalyses the reaction a (2R,3R)-dihydroflavonol + 2-oxoglutarate + O2 = a flavonol + succinate + CO2 + H2O. The enzyme catalyses a (2S)-flavan-4-one + 2-oxoglutarate + O2 = a (2R,3R)-dihydroflavonol + succinate + CO2. Its pathway is secondary metabolite biosynthesis; flavonoid biosynthesis. Catalyzes the formation of flavonols from dihydroflavonols. It can act on dihydrokaempferol to produce kaempferol, on dihydroquercetin to produce quercitin and on dihydromyricetin to produce myricetin. In Matthiola incana (Common stock), this protein is Flavonol synthase/flavanone 3-hydroxylase.